Reading from the N-terminus, the 436-residue chain is Arginine biosynthesis bifunctional protein ArgJ, mitochondrial (436 aa).

Residues Thr172, Lys198, Thr209, Glu298, Asn431, and Ser436 each coordinate substrate. Thr209 (nucleophile) is an active-site residue.

This sequence belongs to the ArgJ family. In terms of assembly, heterodimer of an alpha and a beta chain. Post-translationally, the alpha and beta chains are autoproteolytically processed from a single precursor protein within the mitochondrion.

It localises to the mitochondrion matrix. The catalysed reaction is N(2)-acetyl-L-ornithine + L-glutamate = N-acetyl-L-glutamate + L-ornithine. It carries out the reaction L-glutamate + acetyl-CoA = N-acetyl-L-glutamate + CoA + H(+). It participates in amino-acid biosynthesis; L-arginine biosynthesis; L-ornithine and N-acetyl-L-glutamate from L-glutamate and N(2)-acetyl-L-ornithine (cyclic): step 1/1. Its pathway is amino-acid biosynthesis; L-arginine biosynthesis; N(2)-acetyl-L-ornithine from L-glutamate: step 1/4. Its function is as follows. Catalyzes two activities which are involved in the cyclic version of arginine biosynthesis: the synthesis of acetylglutamate from glutamate and acetyl-CoA, and of ornithine by transacetylation between acetylornithine and glutamate. This chain is Arginine biosynthesis bifunctional protein ArgJ, mitochondrial, found in Meyerozyma guilliermondii (strain ATCC 6260 / CBS 566 / DSM 6381 / JCM 1539 / NBRC 10279 / NRRL Y-324) (Yeast).